The sequence spans 857 residues: Glucans biosynthesis glucosyltransferase H (857 aa).

A run of 6 helical transmembrane segments spans residues 142–162 (ILLALMIGQTIVAGWYMKGIL), 196–216 (ILILFGILFCWVSAGFWTALM), 515–535 (VFLTGVMSYLSAPLWFLFLVL), 572–592 (LFSTTIVLLFLPKLLSVILIW), 606–626 (TLSMLMEMLFSMLLAPVRMIF), and 682–702 (FLWWLAPIVGSLVLSIPVSVI).

The protein belongs to the glycosyltransferase 2 family. OpgH subfamily.

Its subcellular location is the cell inner membrane. It functions in the pathway glycan metabolism; osmoregulated periplasmic glucan (OPG) biosynthesis. Involved in the biosynthesis of osmoregulated periplasmic glucans (OPGs). This Pseudomonas putida (strain ATCC 700007 / DSM 6899 / JCM 31910 / BCRC 17059 / LMG 24140 / F1) protein is Glucans biosynthesis glucosyltransferase H.